The primary structure comprises 299 residues: Taste receptor type 2 member 45 (299 aa).

A topological domain (extracellular) is located at residue Met1. The helical transmembrane segment at 2 to 22 (ITFLPIIFSILVVVTFVIGNF) threads the bilayer. Residues 23–55 (ANGFIALVNSTEWVKRQKISFADQIVTALAVSR) are Cytoplasmic-facing. Residues 56–76 (VGLLWVLLLNWYSTVLNPAFC) form a helical membrane-spanning segment. Topologically, residues 77–98 (SVELRTTAYNIWAVTGHFSNWP) are extracellular. Residues 99-119 (ATSLSIFYLLKIANFSNLIFL) form a helical membrane-spanning segment. Residues 120 to 126 (RLKRRVK) lie on the Cytoplasmic side of the membrane. A helical transmembrane segment spans residues 127-147 (SVILVVLLGPLLFLACHLFVV). Topologically, residues 148 to 178 (NMNQIVWTKEYEGNMTWKIKLRRAMYLSDTT) are extracellular. N-linked (GlcNAc...) asparagine glycosylation is present at Asn161. A helical membrane pass occupies residues 179-199 (VTMLANLVPFTVTLISFLLLV). At 200–229 (CSLCKHLKKMQLHGKGSQDPSTKVHIKVLQ) the chain is on the cytoplasmic side. Residues 230–250 (TVISFFLLRAIYFVSVIISVW) traverse the membrane as a helical segment. At 251 to 259 (SFKNLENKP) the chain is on the extracellular side. Residues 260–280 (VFMFCQAIGFSCSSAHPFILI) traverse the membrane as a helical segment. The Cytoplasmic segment spans residues 281–299 (WGNKKLKQTYLSVLWQMRY).

It belongs to the G-protein coupled receptor T2R family. As to expression, expressed in subsets of taste receptor cells of the tongue and exclusively in gustducin-positive cells.

Its subcellular location is the membrane. Its function is as follows. Receptor that may play a role in the perception of bitterness and is gustducin-linked. May play a role in sensing the chemical composition of the gastrointestinal content. The activity of this receptor may stimulate alpha gustducin, mediate PLC-beta-2 activation and lead to the gating of TRPM5. The sequence is that of Taste receptor type 2 member 45 (TAS2R45) from Homo sapiens (Human).